We begin with the raw amino-acid sequence, 374 residues long: UPF0496 protein At3g28270 (374 aa).

Positions 171–210 (KVLTTQFERIKKQQESLLEEVSETRKKIQDEISNLEKKTL) form a coiled coil. Transmembrane regions (helical) follow at residues 214 to 234 (VVFG…IATG) and 235 to 255 (VGAA…GWAG). Residues 256–321 (VYTTLDKKKD…MLKLVDNAID (66 aa)) are a coiled coil.

This sequence belongs to the UPF0496 family.

The protein resides in the membrane. The protein is UPF0496 protein At3g28270 of Arabidopsis thaliana (Mouse-ear cress).